Reading from the N-terminus, the 226-residue chain is Lysoplasmalogenase TMEM86B (226 aa).

Topologically, residues 1–23 (MDPGKEGLPRKPRFSAQQLHVGK) are cytoplasmic. The helical transmembrane segment at 24–40 (WLSPFFFTCAVYFLLWI) threads the bilayer. The Extracellular segment spans residues 41-46 (PDDQPS). Residues 47–64 (WVGALVKCLPVLSLVVFL) traverse the membrane as a helical segment. At 65–76 (RAVDAGGGYSAR) the chain is on the cytoplasmic side. Residues 77–93 (LQGALLCSAVGDACLVW) traverse the membrane as a helical segment. Residues 94–99 (PEAFLH) are Extracellular-facing. A helical transmembrane segment spans residues 100-117 (GVAAFAAAHLLYLWAFGL). The Cytoplasmic portion of the chain corresponds to 118 to 123 (TPLQPG). Residues 124–140 (LLLLVILAALPYYGLLL) form a helical membrane-spanning segment. The Extracellular segment spans residues 141 to 146 (WHLPPD). Residues 147–163 (LVLALTAYSLALATMLW) traverse the membrane as a helical segment. At 164–171 (RGLARGGS) the chain is on the cytoplasmic side. A helical membrane pass occupies residues 172-188 (TGWGALLFTLSDTTLAW). The Extracellular segment spans residues 189 to 199 (NAFAQPLPHAR). The helical transmembrane segment at 200 to 217 (LVVMTTYYSAQVLISLSV) threads the bilayer. At 218–226 (SQSPKLKPN) the chain is on the cytoplasmic side.

The protein belongs to the TMEM86 family. In terms of assembly, homodimer.

Its subcellular location is the endoplasmic reticulum membrane. It is found in the cytoplasm. It carries out the reaction a 1-O-(1Z-alkenyl)-sn-glycero-3-phosphocholine + H2O = a 2,3-saturated aldehyde + sn-glycerol 3-phosphocholine. The catalysed reaction is a 1-O-(1Z-alkenyl)-sn-glycero-3-phosphoethanolamine + H2O = a 2,3-saturated aldehyde + sn-glycero-3-phosphoethanolamine. Competitively inhibited by lysophosphatidic acid. Functionally, catalyzes the hydrolysis of the vinyl ether bond of choline or ethanolamine lysoplasmalogens, forming fatty aldehyde and glycerophosphocholine or glycerophosphoethanolamine, respectively and is specific for the sn-2-deacylated (lyso) form of plasmalogen. The polypeptide is Lysoplasmalogenase TMEM86B (TMEM86B) (Sus scrofa (Pig)).